Consider the following 72-residue polypeptide: Translation initiation factor IF-1 (72 aa).

Residues 1-72 (MAKQDVIELE…TRGRITYRYK (72 aa)) form the S1-like domain.

It belongs to the IF-1 family. As to quaternary structure, component of the 30S ribosomal translation pre-initiation complex which assembles on the 30S ribosome in the order IF-2 and IF-3, IF-1 and N-formylmethionyl-tRNA(fMet); mRNA recruitment can occur at any time during PIC assembly.

The protein resides in the cytoplasm. Functionally, one of the essential components for the initiation of protein synthesis. Stabilizes the binding of IF-2 and IF-3 on the 30S subunit to which N-formylmethionyl-tRNA(fMet) subsequently binds. Helps modulate mRNA selection, yielding the 30S pre-initiation complex (PIC). Upon addition of the 50S ribosomal subunit IF-1, IF-2 and IF-3 are released leaving the mature 70S translation initiation complex. This Staphylococcus aureus (strain USA300 / TCH1516) protein is Translation initiation factor IF-1.